We begin with the raw amino-acid sequence, 314 residues long: Leucine-rich repeat-containing protein 59 (314 aa).

The Cytoplasmic portion of the chain corresponds to Met1–Ser247. LRR repeat units lie at residues Asp14–Ala35, Lys38–Thr60, His61–Leu82, Asn84–Lys106, and Ser107–Ala126. A coiled-coil region spans residues Met146–Lys216. 2 disordered regions span residues Arg165 to Lys197 and Glu212 to Ser237. The span at Lys215 to Ala225 shows a compositional bias: basic residues. A helical membrane pass occupies residues Leu248 to Val268. Residues Ala269–Thr314 are Lumenal-facing.

Interacts with SGO1.

Its subcellular location is the microsome membrane. It is found in the endoplasmic reticulum membrane. The protein resides in the nucleus envelope. Required for nuclear import of FGF1. The protein is Leucine-rich repeat-containing protein 59 (lrrc59) of Danio rerio (Zebrafish).